A 293-amino-acid chain; its full sequence is Ribosomal protein L11 methyltransferase (293 aa).

S-adenosyl-L-methionine contacts are provided by Thr145, Gly166, Asp188, and Asn230.

This sequence belongs to the methyltransferase superfamily. PrmA family.

The protein localises to the cytoplasm. The enzyme catalyses L-lysyl-[protein] + 3 S-adenosyl-L-methionine = N(6),N(6),N(6)-trimethyl-L-lysyl-[protein] + 3 S-adenosyl-L-homocysteine + 3 H(+). Functionally, methylates ribosomal protein L11. The sequence is that of Ribosomal protein L11 methyltransferase from Klebsiella pneumoniae (strain 342).